Reading from the N-terminus, the 540-residue chain is MAAKQLIFGDAARQSILKGVTLLTDAVKATLGPRGRNVVIERKFGSPNVTKDGVTVAKEIDLKEPFENMGAQLVREVASKTSDVAGDGTTTATVLAYAIYKEGLKYVSAGANSMDLKRGIDKAVEAVVEELKKISKPVVDKKEIAQVGTISANNDVSIGELIAEAMDKVGKDGVITVEEAKGMATTLDIVEGMQFDRGYISPYFITDPERLECILEDAFVLIHDKKISTMKDLLPILEQIARMGRPLLIIAEDVEGEALATLVVNKLRGVLQVCAVKAPGFGERRKAMLEDIAILTGGTVISEDIGLKLENVKVEDLGKAKKIIIDKDNTTIVEGAGDPQKIQARIKQIKVQIDETTSDYDREKLQERLAKLAGGVARINVGAATEAEMKEKKARVEDALNATRAAVEEGIVPGGGVALLRCQKALEKIKFENHDQQLGAEIVKKALEEPIKQIIANAGVEATLIVEKVKENKNINYGYDAYAEKFVDMMEAGIIDPTKVTRTALQNAASVAGLMLTTEVLVAEIPEEEKKPPMPSPDMY.

Residues 30 to 33, K51, 87 to 91, G415, and D496 contribute to the ATP site; these read TLGP and DGTTT.

The protein belongs to the chaperonin (HSP60) family. As to quaternary structure, forms a cylinder of 14 subunits composed of two heptameric rings stacked back-to-back. Interacts with the co-chaperonin GroES.

It is found in the cytoplasm. It carries out the reaction ATP + H2O + a folded polypeptide = ADP + phosphate + an unfolded polypeptide.. Its function is as follows. Together with its co-chaperonin GroES, plays an essential role in assisting protein folding. The GroEL-GroES system forms a nano-cage that allows encapsulation of the non-native substrate proteins and provides a physical environment optimized to promote and accelerate protein folding. In Thermodesulfovibrio yellowstonii (strain ATCC 51303 / DSM 11347 / YP87), this protein is Chaperonin GroEL.